Consider the following 510-residue polypeptide: Light-independent protochlorophyllide reductase subunit B (510 aa).

Aspartate 36 lines the [4Fe-4S] cluster pocket. Residue aspartate 296 is the Proton donor of the active site. 431 to 432 (GM) is a substrate binding site.

The protein belongs to the ChlB/BchB/BchZ family. Protochlorophyllide reductase is composed of three subunits; ChlL, ChlN and ChlB. Forms a heterotetramer of two ChlB and two ChlN subunits. The cofactor is [4Fe-4S] cluster.

The protein resides in the plastid. Its subcellular location is the chloroplast. It carries out the reaction chlorophyllide a + oxidized 2[4Fe-4S]-[ferredoxin] + 2 ADP + 2 phosphate = protochlorophyllide a + reduced 2[4Fe-4S]-[ferredoxin] + 2 ATP + 2 H2O. The protein operates within porphyrin-containing compound metabolism; chlorophyll biosynthesis (light-independent). Functionally, component of the dark-operative protochlorophyllide reductase (DPOR) that uses Mg-ATP and reduced ferredoxin to reduce ring D of protochlorophyllide (Pchlide) to form chlorophyllide a (Chlide). This reaction is light-independent. The NB-protein (ChlN-ChlB) is the catalytic component of the complex. The polypeptide is Light-independent protochlorophyllide reductase subunit B (Angiopteris evecta (Mule's foot fern)).